We begin with the raw amino-acid sequence, 649 residues long: Acetyl-coenzyme A synthetase (649 aa).

CoA-binding positions include 189–192 (RGGK), threonine 311, and asparagine 335. ATP contacts are provided by residues 387–389 (GEP), 411–416 (DTWWQT), aspartate 500, and arginine 515. Residue serine 523 coordinates CoA. Arginine 526 serves as a coordination point for ATP. Residues valine 537, histidine 539, and valine 542 each coordinate Mg(2+). CoA is bound at residue arginine 584. Position 609 is an N6-acetyllysine (lysine 609).

Belongs to the ATP-dependent AMP-binding enzyme family. It depends on Mg(2+) as a cofactor. Acetylated. Deacetylation by the SIR2-homolog deacetylase activates the enzyme.

The enzyme catalyses acetate + ATP + CoA = acetyl-CoA + AMP + diphosphate. Catalyzes the conversion of acetate into acetyl-CoA (AcCoA), an essential intermediate at the junction of anabolic and catabolic pathways. AcsA undergoes a two-step reaction. In the first half reaction, AcsA combines acetate with ATP to form acetyl-adenylate (AcAMP) intermediate. In the second half reaction, it can then transfer the acetyl group from AcAMP to the sulfhydryl group of CoA, forming the product AcCoA. The sequence is that of Acetyl-coenzyme A synthetase from Rhizobium meliloti (strain 1021) (Ensifer meliloti).